A 204-amino-acid chain; its full sequence is MASLNGPLRVGIGGPVGSGKTALMEQLCRRFRDRYEICAITNDIYTKEDARILTVAGALPEERILGVETGGCPHTAIREDASINLAAVAEMRRRFPKLDLVLIESGGDNLAATFSPELADITLYVIDVAGGEKIPRKGGPGITRSDLLIVNKTDLAPLVGADLSVMESDTQRMRGTRPYVFASLREGHGADRVATFIVEAGGLR.

14–21 (GPVGSGKT) serves as a coordination point for GTP.

Belongs to the SIMIBI class G3E GTPase family. UreG subfamily. Homodimer. UreD, UreF and UreG form a complex that acts as a GTP-hydrolysis-dependent molecular chaperone, activating the urease apoprotein by helping to assemble the nickel containing metallocenter of UreC. The UreE protein probably delivers the nickel.

Its subcellular location is the cytoplasm. Its function is as follows. Facilitates the functional incorporation of the urease nickel metallocenter. This process requires GTP hydrolysis, probably effectuated by UreG. This is Urease accessory protein UreG 1 from Methylorubrum populi (strain ATCC BAA-705 / NCIMB 13946 / BJ001) (Methylobacterium populi).